The primary structure comprises 291 residues: Pyridoxal 5'-phosphate synthase subunit PdxS (291 aa).

Asp-23 is a D-ribose 5-phosphate binding site. The active-site Schiff-base intermediate with D-ribose 5-phosphate is Lys-80. D-ribose 5-phosphate is bound at residue Gly-152. Arg-164 serves as a coordination point for D-glyceraldehyde 3-phosphate. D-ribose 5-phosphate-binding positions include Gly-213 and 234–235; that span reads GS.

Belongs to the PdxS/SNZ family. In terms of assembly, in the presence of PdxT, forms a dodecamer of heterodimers.

The enzyme catalyses aldehydo-D-ribose 5-phosphate + D-glyceraldehyde 3-phosphate + L-glutamine = pyridoxal 5'-phosphate + L-glutamate + phosphate + 3 H2O + H(+). Its pathway is cofactor biosynthesis; pyridoxal 5'-phosphate biosynthesis. Its function is as follows. Catalyzes the formation of pyridoxal 5'-phosphate from ribose 5-phosphate (RBP), glyceraldehyde 3-phosphate (G3P) and ammonia. The ammonia is provided by the PdxT subunit. Can also use ribulose 5-phosphate and dihydroxyacetone phosphate as substrates, resulting from enzyme-catalyzed isomerization of RBP and G3P, respectively. The chain is Pyridoxal 5'-phosphate synthase subunit PdxS from Methanocorpusculum labreanum (strain ATCC 43576 / DSM 4855 / Z).